A 509-amino-acid chain; its full sequence is Protein MAIN-LIKE 1 (509 aa).

Residues 477 to 509 (GYGKRRRRNEHTPTPNNGGGNDISSLLLQKEDS) are disordered. Residues 488-503 (TPTPNNGGGNDISSLL) are compositionally biased toward polar residues.

Expressed in root tips, the shoot apical meristem (SAM), leaves, mature flowers and embryos.

It is found in the nucleus. Acts as an important factor for cell fate determination and maintenance throughout plant development. Required for the organization of the root apical meristem (RAM) and the shoot apical meristem (SAM). Required to maintain genome stability and cell division activity in meristematic cells. This chain is Protein MAIN-LIKE 1, found in Arabidopsis thaliana (Mouse-ear cress).